The chain runs to 395 residues: Receptor-like cytoplasmic kinase 176 (395 aa).

Positions 1–45 (MGNCWGAKISSESPCRSASSPSGGTSKYASNSSVSAASVPPTPRS) are disordered. 2 stretches are compositionally biased toward low complexity: residues 10–22 (SSES…SSPS) and 29–39 (ASNSSVSAASV). The region spanning 70 to 355 (FRPDSVLGEG…EQVVAVLEQL (286 aa)) is the Protein kinase domain. ATP is bound by residues 76-84 (LGEGGFGSV) and Lys-108. Asp-205 serves as the catalytic Proton acceptor. Residues 359–395 (KETGANPQLQKKSSSKNAGSNGSKPSSKGKPANARLV) form a disordered region. A compositionally biased stretch (low complexity) spans 369-395 (KKSSSKNAGSNGSKPSSKGKPANARLV).

The protein belongs to the protein kinase superfamily. Ser/Thr protein kinase family. In terms of assembly, interacts with CERK1.

It carries out the reaction L-seryl-[protein] + ATP = O-phospho-L-seryl-[protein] + ADP + H(+). The catalysed reaction is L-threonyl-[protein] + ATP = O-phospho-L-threonyl-[protein] + ADP + H(+). In terms of biological role, functions downstream of CERK1 in the microbial peptidoglycans (PGNs) and fungal chitin signaling pathways that mediate innate immunity. Participates in the activation of defense genes during response to PGN and chitin. The sequence is that of Receptor-like cytoplasmic kinase 176 from Oryza sativa subsp. japonica (Rice).